The primary structure comprises 198 residues: Transcriptional regulator GfcR (198 aa).

The protein belongs to the purine/pyrimidine phosphoribosyltransferase family. GfcR subfamily.

This is Transcriptional regulator GfcR from Methanosphaera stadtmanae (strain ATCC 43021 / DSM 3091 / JCM 11832 / MCB-3).